Reading from the N-terminus, the 429-residue chain is MNGLMIAAPSSGSGKTTVTLGLMRALRRRGLSIAPGKAGPDYIDPAFHTAASGKPCFNYDPWAMRPELLLANAAAAAEDGSVLIMEAMMGLFDGAADGTGAPADLAAALGLAVILVVDCARLSHSVAALVGGYARHRDDVRVAGVILNRVGSDRHEGMLRDALAGIAMPVFGVLRQDAALKLPERHLGLVQAGEHGSLEAFIDHAAMRVASGCDLEAVLAAATPLTVGERAGTLKPLGQRTAVARDVAFAFCYEHLLSGWRGQGAEVTFFSPLADEAPDPRADAVYLPGGYPELHAEQLSNASNFRAAMHKAAGGGARVFGECGGYMVLGEGLVAADGGRYEMLGLLPLVTSFAERKRHLGYRRVTPVDDVFFRGPMTAHEFHYATIVSEGAAEPLFTVRDAAGLDLGRAGLRRRNVAGSFMHLIDFSE.

The GATase cobBQ-type domain maps to 240-429 (RTAVARDVAF…SFMHLIDFSE (190 aa)). Cys-323 acts as the Nucleophile in catalysis.

Belongs to the CobB/CbiA family. Mg(2+) serves as cofactor.

The enzyme catalyses hydrogenobyrinate + 2 L-glutamine + 2 ATP + 2 H2O = hydrogenobyrinate a,c-diamide + 2 L-glutamate + 2 ADP + 2 phosphate + 2 H(+). Its pathway is cofactor biosynthesis; adenosylcobalamin biosynthesis; cob(II)yrinate a,c-diamide from precorrin-2 (aerobic route): step 9/10. Its function is as follows. Catalyzes the ATP-dependent amidation of the two carboxylate groups at positions a and c of hydrogenobyrinate, using either L-glutamine or ammonia as the nitrogen source. The chain is Hydrogenobyrinate a,c-diamide synthase from Rhizobium meliloti (strain 1021) (Ensifer meliloti).